A 249-amino-acid polypeptide reads, in one-letter code: Probable transcriptional regulatory protein OTT_1378 (249 aa).

Belongs to the TACO1 family.

The protein localises to the cytoplasm. In Orientia tsutsugamushi (strain Ikeda) (Rickettsia tsutsugamushi), this protein is Probable transcriptional regulatory protein OTT_1378.